The following is a 160-amino-acid chain: Protein-export protein SecB (160 aa).

It belongs to the SecB family. Homotetramer, a dimer of dimers. One homotetramer interacts with 1 SecA dimer.

It is found in the cytoplasm. In terms of biological role, one of the proteins required for the normal export of preproteins out of the cell cytoplasm. It is a molecular chaperone that binds to a subset of precursor proteins, maintaining them in a translocation-competent state. It also specifically binds to its receptor SecA. The protein is Protein-export protein SecB of Nitrosomonas eutropha (strain DSM 101675 / C91 / Nm57).